The following is a 206-amino-acid chain: Max dimerization protein 3 (206 aa).

Residues 8 to 25 (IQVLLQAAEFLERREREA) are interaction with SIN3A and SIN3B. The bHLH domain maps to 57 to 109 (SGRHVHNELEKRRRAQLKRCLEQLRQQMPLGVDHTRYTTLSLLRGARMHIQKL).

Efficient DNA binding requires dimerization with another bHLH protein. Binds DNA as a heterodimer with MAX. Interacts with SIN3A AND SIN3B. Interacts with RNF17.

The protein localises to the nucleus. Its function is as follows. Transcriptional repressor. Binds with MAX to form a sequence-specific DNA-binding protein complex which recognizes the core sequence 5'-CAC[GA]TG-3'. Antagonizes MYC transcriptional activity by competing for MAX and suppresses MYC dependent cell transformation. The sequence is that of Max dimerization protein 3 (Mxd3) from Rattus norvegicus (Rat).